A 508-amino-acid chain; its full sequence is Amphoterin-induced protein 3 (508 aa).

The signal sequence occupies residues 1-19; it reads MAWLVLLGLLLCMLGAGSG. Over 20–383 the chain is Extracellular; it reads TSDLEGVLPP…PRPEPEAFNT (364 aa). An LRRNT domain is found at 25-61; it reads GVLPPDPHNCPNKCVCAADVLSCAGRGLQDLPAALPA. 2 cysteine pairs are disulfide-bonded: Cys-34-Cys-40 and Cys-38-Cys-47. LRR repeat units lie at residues 62 to 83, 86 to 107, 110 to 131, 134 to 155, 158 to 178, and 184 to 207; these read TAAE…WLAP, RLRA…VFTN, GLRI…DLDG, ELEK…AFQG, MLSH…NHLH, and RLRT…AALP. Asn-107 carries an N-linked (GlcNAc...) asparagine glycan. The LRRCT domain maps to 219-275; sequence NPLPCDCSLYHLLRRWHQRGLSALHDFEREYTCLAFKVAESRVRFFEHSRVFKNCSV. Disulfide bonds link Cys-223/Cys-251, Cys-225/Cys-273, and Cys-300/Cys-352. N-linked (GlcNAc...) asparagine glycosylation is found at Asn-272, Asn-301, Asn-362, and Asn-368. In terms of domain architecture, Ig-like C2-type spans 279–370; sequence PGLELPEEEL…HNQTLEYNVS (92 aa). The helical transmembrane segment at 384–404 threads the bilayer; the sequence is GFTTLLGCIVGLVLVLLYLFA. The Cytoplasmic portion of the chain corresponds to 405 to 508; it reads PPCRGCCRCC…STGSEGLMMS (104 aa).

This sequence belongs to the immunoglobulin superfamily. AMIGO family. In terms of assembly, binds AMIGO1 or AMIGO2.

The protein localises to the membrane. Functionally, may mediate heterophilic cell-cell interaction. May contribute to signal transduction through its intracellular domain. The sequence is that of Amphoterin-induced protein 3 from Rattus norvegicus (Rat).